The sequence spans 201 residues: Large ribosomal subunit protein uL4 (201 aa).

The tract at residues 44–71 is disordered; it reads RAQKTRAEVTGSGKKPWRQKGTGRARSG.

It belongs to the universal ribosomal protein uL4 family. Part of the 50S ribosomal subunit.

One of the primary rRNA binding proteins, this protein initially binds near the 5'-end of the 23S rRNA. It is important during the early stages of 50S assembly. It makes multiple contacts with different domains of the 23S rRNA in the assembled 50S subunit and ribosome. In terms of biological role, forms part of the polypeptide exit tunnel. This chain is Large ribosomal subunit protein uL4, found in Escherichia fergusonii (strain ATCC 35469 / DSM 13698 / CCUG 18766 / IAM 14443 / JCM 21226 / LMG 7866 / NBRC 102419 / NCTC 12128 / CDC 0568-73).